The primary structure comprises 132 residues: Movement protein TGB3 (132 aa).

At 1-11 (MVLVVKVDLSN) the chain is on the cytoplasmic side. The chain crosses the membrane as a helical span at residues 12–32 (IVLYIVAGCVVVSMLYSPFFS). Topologically, residues 33-109 (NDVKASSYAG…TETLFIILSR (77 aa)) are lumenal. The helical transmembrane segment at 110–130 (LFGLAVFLFMICLMSIVWFWC) threads the bilayer. The Cytoplasmic segment spans residues 131–132 (HR).

The protein belongs to the benyvirus TGB3 movement protein family. Interacts with movement proteins TGB1 and TGB2.

It localises to the host cell junction. The protein localises to the host plasmodesma. Its subcellular location is the host endoplasmic reticulum membrane. In terms of biological role, participates in the transport of viral RNA to the plasmodesmata. TGBp3 most probably contains signals of plasmodesmata targeting is therefore involved in the targeting of TGBp2, and viral RNAs-TGBp1 (RNP complex), to plasmodesmata. Can gate plasmodesmata and increase their size exclusion limit. The polypeptide is Movement protein TGB3 (Beta macrocarpa (Beet)).